The following is a 209-amino-acid chain: Orotate phosphoribosyltransferase (209 aa).

5-phospho-alpha-D-ribose 1-diphosphate contacts are provided by residues R98, K102, H104, and 124 to 132 (EDLISTGKS). S128 serves as a coordination point for orotate.

It belongs to the purine/pyrimidine phosphoribosyltransferase family. PyrE subfamily. As to quaternary structure, homodimer. Mg(2+) is required as a cofactor.

It catalyses the reaction orotidine 5'-phosphate + diphosphate = orotate + 5-phospho-alpha-D-ribose 1-diphosphate. Its pathway is pyrimidine metabolism; UMP biosynthesis via de novo pathway; UMP from orotate: step 1/2. Functionally, catalyzes the transfer of a ribosyl phosphate group from 5-phosphoribose 1-diphosphate to orotate, leading to the formation of orotidine monophosphate (OMP). The sequence is that of Orotate phosphoribosyltransferase from Malacoplasma penetrans (strain HF-2) (Mycoplasma penetrans).